The sequence spans 255 residues: Ly6/PLAUR domain-containing protein 8 (255 aa).

An N-terminal signal peptide occupies residues 1-20 (MRGVFIAGVIAAFAITVVDS). Residues asparagine 22, asparagine 30, asparagine 53, asparagine 72, asparagine 76, asparagine 105, asparagine 115, asparagine 128, asparagine 154, asparagine 169, asparagine 179, asparagine 200, and asparagine 210 are each glycosylated (N-linked (GlcNAc...) asparagine). The UPAR/Ly6 domain occupies 121–170 (CMSCYGHNKTLCEEKPQKCYEGEQCVFIIAEMVNGSGRVELKGCSDISNS). Serine 233 carries the GPI-anchor amidated serine lipid modification. The propeptide at 234-255 (MGTKASFTSSIFGSLLLLKLLF) is removed in mature form.

The protein belongs to the CNF-like-inhibitor family. Highly N-glycosylated. Not O-glycosylated. In terms of processing, GPI-anchored. The GPI-anchor is cleaved, leading to secretion into the colonic lumen. As to expression, specifically present in enterocytes located at the uppermost epithelial layer of the colon (at protein level). Exclusively expressed in the large intestine: specifically expressed on the apical surface of epithelial cells located at the uppermost layer of the colonic gland.

The protein resides in the cell membrane. It is found in the secreted. Functionally, secreted protein specifically required to prevent invasion of Gram-negative bacteria in the inner mucus layer of the colon epithelium, a portion of the large intestine which is free of commensal microbiota. Prevents invasion of flagellated microbiota by binding to the flagellum of bacteria, such as P.mirabilis, thereby inhibiting bacterial motility in the intestinal lumen. Segregation of intestinal bacteria and epithelial cells in the colon is required to preserve intestinal homeostasis. This Mus musculus (Mouse) protein is Ly6/PLAUR domain-containing protein 8.